The sequence spans 160 residues: MD-2-related lipid-recognition protein ROSY1 (160 aa).

The N-terminal stretch at Met1–Cys23 is a signal peptide.

In terms of assembly, interacts with SYT1. Expressed exclusively in roots, in epidermis and cortex cells of the root elongation zone, and lateral root cap cells at the root tip.

Its subcellular location is the cytoplasm. Involved in the regulation of gravitropic response and basipetal auxin transport in roots. Involved in salt stress tolerance. May facilitate membrane trafficking and asymmetric cell elongation via SYT1. Binds stigmasterol and dipalmitoyl phosphoethanolamine (DPPE) in vitro. This is MD-2-related lipid-recognition protein ROSY1 from Arabidopsis thaliana (Mouse-ear cress).